A 316-amino-acid polypeptide reads, in one-letter code: Acetaldehyde dehydrogenase (316 aa).

NAD(+) is bound at residue 11-14 (SGNI). Cysteine 131 functions as the Acyl-thioester intermediate in the catalytic mechanism. Residues 162–170 (SAGPGTRAN) and asparagine 289 each bind NAD(+).

It belongs to the acetaldehyde dehydrogenase family. In terms of assembly, interacts with MhpE.

It carries out the reaction acetaldehyde + NAD(+) + CoA = acetyl-CoA + NADH + H(+). The protein operates within aromatic compound metabolism; 3-phenylpropanoate degradation. Catalyzes the conversion of acetaldehyde to acetyl-CoA, using NAD(+) and coenzyme A. Is the final enzyme in the meta-cleavage pathway for the degradation of aromatic compounds. The protein is Acetaldehyde dehydrogenase of Klebsiella pneumoniae subsp. pneumoniae (strain ATCC 700721 / MGH 78578).